A 626-amino-acid polypeptide reads, in one-letter code: 4-hydroxy-3-methylbut-2-en-1-yl diphosphate synthase (flavodoxin) (626 aa).

[4Fe-4S] cluster-binding residues include Cys-521, Cys-524, Cys-555, and Glu-562.

It belongs to the IspG family. The cofactor is [4Fe-4S] cluster.

The catalysed reaction is (2E)-4-hydroxy-3-methylbut-2-enyl diphosphate + oxidized [flavodoxin] + H2O + 2 H(+) = 2-C-methyl-D-erythritol 2,4-cyclic diphosphate + reduced [flavodoxin]. It functions in the pathway isoprenoid biosynthesis; isopentenyl diphosphate biosynthesis via DXP pathway; isopentenyl diphosphate from 1-deoxy-D-xylulose 5-phosphate: step 5/6. Its function is as follows. Converts 2C-methyl-D-erythritol 2,4-cyclodiphosphate (ME-2,4cPP) into 1-hydroxy-2-methyl-2-(E)-butenyl 4-diphosphate. The sequence is that of 4-hydroxy-3-methylbut-2-en-1-yl diphosphate synthase (flavodoxin) from Bacteroides fragilis (strain YCH46).